The primary structure comprises 299 residues: ATP phosphoribosyltransferase (299 aa).

Belongs to the ATP phosphoribosyltransferase family. Long subfamily. As to quaternary structure, equilibrium between an active dimeric form, an inactive hexameric form and higher aggregates. Interconversion between the various forms is largely reversible and is influenced by the natural substrates and inhibitors of the enzyme. The cofactor is Mg(2+).

The protein localises to the cytoplasm. It carries out the reaction 1-(5-phospho-beta-D-ribosyl)-ATP + diphosphate = 5-phospho-alpha-D-ribose 1-diphosphate + ATP. The protein operates within amino-acid biosynthesis; L-histidine biosynthesis; L-histidine from 5-phospho-alpha-D-ribose 1-diphosphate: step 1/9. With respect to regulation, feedback inhibited by histidine. Functionally, catalyzes the condensation of ATP and 5-phosphoribose 1-diphosphate to form N'-(5'-phosphoribosyl)-ATP (PR-ATP). Has a crucial role in the pathway because the rate of histidine biosynthesis seems to be controlled primarily by regulation of HisG enzymatic activity. In Blochmanniella pennsylvanica (strain BPEN), this protein is ATP phosphoribosyltransferase.